Consider the following 177-residue polypeptide: Large ribosomal subunit protein uL6 (177 aa).

Position 44 is an N6-acetyllysine (Lys44).

This sequence belongs to the universal ribosomal protein uL6 family. As to quaternary structure, part of the 50S ribosomal subunit.

In terms of biological role, this protein binds to the 23S rRNA, and is important in its secondary structure. It is located near the subunit interface in the base of the L7/L12 stalk, and near the tRNA binding site of the peptidyltransferase center. The protein is Large ribosomal subunit protein uL6 of Shigella sonnei (strain Ss046).